A 546-amino-acid chain; its full sequence is Chaperonin GroEL (546 aa).

ATP is bound by residues Thr29–Pro32, Lys50, Asp86–Thr90, Gly414, and Asp494. A disordered region spans residues Lys525–Met546. Residues Asp537–Met546 show a composition bias toward gly residues.

Belongs to the chaperonin (HSP60) family. As to quaternary structure, forms a cylinder of 14 subunits composed of two heptameric rings stacked back-to-back. Interacts with the co-chaperonin GroES.

The protein resides in the cytoplasm. It carries out the reaction ATP + H2O + a folded polypeptide = ADP + phosphate + an unfolded polypeptide.. Together with its co-chaperonin GroES, plays an essential role in assisting protein folding. The GroEL-GroES system forms a nano-cage that allows encapsulation of the non-native substrate proteins and provides a physical environment optimized to promote and accelerate protein folding. This chain is Chaperonin GroEL, found in Bdellovibrio bacteriovorus (strain ATCC 15356 / DSM 50701 / NCIMB 9529 / HD100).